A 160-amino-acid polypeptide reads, in one-letter code: Lymphocyte antigen 86 (160 aa).

The signal sequence occupies residues M1–T20. 3 disulfide bridges follow: C28–C53, C40–C149, and C97–C107.

In terms of assembly, M-shaped tetramer of two CD180-LY86 heterodimers. As to expression, detected in the macrophage-like 10.4 cells.

Its subcellular location is the secreted. It localises to the extracellular space. Functionally, may cooperate with CD180 and TLR4 to mediate the innate immune response to bacterial lipopolysaccharide (LPS) and cytokine production. Important for efficient CD180 cell surface expression. The polypeptide is Lymphocyte antigen 86 (LY86) (Gallus gallus (Chicken)).